The chain runs to 283 residues: Nucleoid occlusion protein (283 aa).

Residues 1 to 26 (MKQPFSRLFGFGDKQDQEMETGKQEE) form a disordered region. Over residues 13 to 26 (DKQDQEMETGKQEE) the composition is skewed to basic and acidic residues. Residues 143–162 (ESLAQRLGKGQSTIANKLRL) constitute a DNA-binding region (H-T-H motif).

This sequence belongs to the ParB family.

It localises to the cytoplasm. The protein localises to the nucleoid. In terms of biological role, effects nucleoid occlusion by binding relatively nonspecifically to DNA and preventing the assembly of the division machinery in the vicinity of the nucleoid, especially under conditions that disturb the cell cycle. It helps to coordinate cell division and chromosome segregation by preventing the formation of the Z ring through the nucleoid, which would cause chromosome breakage. In Halalkalibacterium halodurans (strain ATCC BAA-125 / DSM 18197 / FERM 7344 / JCM 9153 / C-125) (Bacillus halodurans), this protein is Nucleoid occlusion protein.